Reading from the N-terminus, the 94-residue chain is C-C motif chemokine 17 (94 aa).

The signal sequence occupies residues methionine 1–alanine 23. 2 disulfides stabilise this stretch: cysteine 33–cysteine 57 and cysteine 34–cysteine 73.

Belongs to the intercrine beta (chemokine CC) family. In terms of tissue distribution, constitutively expressed in thymus. Detected at lower levels in the lung, colon and small intestine. Expressed in stimulated peripheral blood mononuclear cells, but not in resting cells.

Its subcellular location is the secreted. Functionally, chemokine, which displays chemotactic activity for T lymphocytes, preferentially Th2 cells, but not monocytes or granulocytes. Therefore plays an important role in a wide range of inflammatory and immunological processes. Acts by binding to CCR4 at T-cell surface. Mediates GM-CSF/CSF2-driven pain and inflammation. In the brain, required to maintain the typical, highly branched morphology of hippocampal microglia under homeostatic conditions. May be important for the appropriate adaptation of microglial morphology and synaptic plasticity to acute lipopolysaccharide (LPS)-induced neuroinflammation. Plays a role in wound healing, mainly by inducing fibroblast migration into the wound. This is C-C motif chemokine 17 (CCL17) from Homo sapiens (Human).